A 700-amino-acid chain; its full sequence is Long chain acyl-CoA synthetase 7, peroxisomal (700 aa).

The interval 1–29 is disordered; the sequence is MEFASPEQRRLETIRSHIDTSPTNDQSSS. A compositionally biased stretch (basic and acidic residues) spans 7-18; the sequence is EQRRLETIRSHI. The Microbody targeting signal motif lies at 10–18; the sequence is RLETIRSHI. Polar residues predominate over residues 19–29; the sequence is DTSPTNDQSSS. An ATP-binding site is contributed by 266-277; it reads ICYTSGTTGTPK. The tract at residues 526–550 is fatty acid-binding; it reads DGWLHTGDIGLWLPGGRLKIIDRKK. The short motif at 698 to 700 is the Microbody targeting signal element; it reads SKL.

The protein belongs to the ATP-dependent AMP-binding enzyme family. In terms of assembly, interacts with PEX5. Mg(2+) serves as cofactor. In terms of tissue distribution, expressed in roots, stems, leaves flowers and germinating seedling. Preferentially expressed in seeds.

The protein resides in the peroxisome. The catalysed reaction is a long-chain fatty acid + ATP + CoA = a long-chain fatty acyl-CoA + AMP + diphosphate. It carries out the reaction decanoate + ATP + CoA = decanoyl-CoA + AMP + diphosphate. The enzyme catalyses dodecanoate + ATP + CoA = dodecanoyl-CoA + AMP + diphosphate. It catalyses the reaction tetradecanoate + ATP + CoA = tetradecanoyl-CoA + AMP + diphosphate. The catalysed reaction is hexadecanoate + ATP + CoA = hexadecanoyl-CoA + AMP + diphosphate. It carries out the reaction (9Z)-octadecenoate + ATP + CoA = (9Z)-octadecenoyl-CoA + AMP + diphosphate. The enzyme catalyses (9Z,12Z)-octadecadienoate + ATP + CoA = (9Z,12Z)-octadecadienoyl-CoA + AMP + diphosphate. It catalyses the reaction (9Z,12Z,15Z)-octadecatrienoate + ATP + CoA = (9Z,12Z,15Z)-octadecatrienoyl-CoA + AMP + diphosphate. Its pathway is lipid metabolism; fatty acid metabolism. In terms of biological role, activation of long-chain fatty acids for both synthesis of cellular lipids, and degradation via beta-oxidation. Preferentially uses palmitate, palmitoleate, oleate, linoleate and eicosenoate as substrates. Can use myristate and linolenate as substrates. Functions redundantly with LACS6 in lipid mobilization for beta-oxidation during seed germination, which is essential for postgerminative growth and seedling establishment. This is Long chain acyl-CoA synthetase 7, peroxisomal from Arabidopsis thaliana (Mouse-ear cress).